Reading from the N-terminus, the 394-residue chain is F-box protein At2g17830 (394 aa).

An F-box domain is found at 1–47 (MAIMSDLPRDLLAEILSRVPLASLRSVRFTCKKWNDLSKDRSFLKKQ).

This is F-box protein At2g17830 from Arabidopsis thaliana (Mouse-ear cress).